A 32-amino-acid chain; its full sequence is Ribulose bisphosphate carboxylase/oxygenase activase, chloroplastic (32 aa).

Residues F13–K32 are disordered.

It belongs to the RuBisCO activase family.

It localises to the plastid. The protein resides in the chloroplast stroma. Activation of RuBisCO (ribulose-1,5-bisphosphate carboxylase/oxygenase; EC 4.1.1.39) involves the ATP-dependent carboxylation of the epsilon-amino group of lysine leading to a carbamate structure. The sequence is that of Ribulose bisphosphate carboxylase/oxygenase activase, chloroplastic from Populus euphratica (Euphrates poplar).